Consider the following 325-residue polypeptide: Ribosomal RNA small subunit methyltransferase H (325 aa).

Residues 39 to 41 (GGH), D59, F90, D108, and Q115 each bind S-adenosyl-L-methionine.

The protein belongs to the methyltransferase superfamily. RsmH family.

It is found in the cytoplasm. It carries out the reaction cytidine(1402) in 16S rRNA + S-adenosyl-L-methionine = N(4)-methylcytidine(1402) in 16S rRNA + S-adenosyl-L-homocysteine + H(+). Specifically methylates the N4 position of cytidine in position 1402 (C1402) of 16S rRNA. In Leptothrix cholodnii (strain ATCC 51168 / LMG 8142 / SP-6) (Leptothrix discophora (strain SP-6)), this protein is Ribosomal RNA small subunit methyltransferase H.